The primary structure comprises 428 residues: MSLDLPPPPARGCRSTEVLKERGQREVFCGLTGIIWLHRKMQDAFFLVVGSRTCAHLLQSAAGVMIFAEPRFGTAVLEEKDLAGLADANAELDREVDRLLARRPDIRQLFLVGSCPSEVIKLDLHRAAERLSAHHGPAVRVYNFSGSGIETTFTQGEDACLASIVPTLPATEARELLLVGALPDVVEDQAVSLLTQLGIGPVRCLPAHHAAEAPGVGPNTVFALVQPFLGDTHGALTRRGARHIAAPFPFGHEGTTLWLKAIADEFGVSAETFEAVTAAPRARARKAVAAASEGLRGKSVFFLPDSQLEPSLARFLTRECGMSAVEVGTPFLHRGILGPDLDLIAEGPVLSEGQDVERQLDRVRAARPDLTVCGLGLANPLEAEGFTTKWAIELVFTPVHFYEQAGDLAGLFSRPVRRRAILRREAAE.

3 residues coordinate [4Fe-4S] cluster: cysteine 29, cysteine 54, and cysteine 115.

The protein belongs to the BchN/ChlN family. In terms of assembly, protochlorophyllide reductase is composed of three subunits; BchL, BchN and BchB. Forms a heterotetramer of two BchB and two BchN subunits. It depends on [4Fe-4S] cluster as a cofactor.

The catalysed reaction is chlorophyllide a + oxidized 2[4Fe-4S]-[ferredoxin] + 2 ADP + 2 phosphate = protochlorophyllide a + reduced 2[4Fe-4S]-[ferredoxin] + 2 ATP + 2 H2O. It functions in the pathway porphyrin-containing compound metabolism; bacteriochlorophyll biosynthesis (light-independent). Its function is as follows. Component of the dark-operative protochlorophyllide reductase (DPOR) that uses Mg-ATP and reduced ferredoxin to reduce ring D of protochlorophyllide (Pchlide) to form chlorophyllide a (Chlide). This reaction is light-independent. The NB-protein (BchN-BchB) is the catalytic component of the complex. The chain is Light-independent protochlorophyllide reductase subunit N from Cereibacter sphaeroides (strain ATCC 17029 / ATH 2.4.9) (Rhodobacter sphaeroides).